A 78-amino-acid chain; its full sequence is UPF0349 protein BH3414 (78 aa).

It belongs to the UPF0349 family.

This chain is UPF0349 protein BH3414, found in Halalkalibacterium halodurans (strain ATCC BAA-125 / DSM 18197 / FERM 7344 / JCM 9153 / C-125) (Bacillus halodurans).